The primary structure comprises 450 residues: MKVIDQFKNKKVLVLGLAKSGESAARLLDKLGAIVTVNDGKPFEDNPAAQSLLEEGIKVITGGHPLELLDEEFALMVKNPGIPYNNPMIEKALAKGIPVLTEVELAYLISEAPIIGITGSNGKTTTTTMIGEVLTAAGQHGLLSGNIGYPASQVAQIASDKDTLVMELSSFQLMGVQEFHPEIAVITNLMPTHIDYHGSFSEYVAAKWNIQNKMTAADFLVLNFNQDLAKDLTSKTEATVIPFSTLEKVDGAYLEDGQLYFRGEVVMAANEIGVPGSHNVENALATIAVAKLRDVDNQTIKETLSAFGGVKHRLQFVDDIKGVKFYNDSKSTNILATQKALSGFDNSKVVLIAGGLDRGNEFDELVPDITGLKKMVILGQSAERVKRAADKAGVAYVEATDIADATRKAYELAIQGDVVLLSPANASWDMYANFEVRGDLFIDTVAELKE.

Residue 119 to 125 coordinates ATP; that stretch reads GSNGKTT.

The protein belongs to the MurCDEF family.

The protein resides in the cytoplasm. The catalysed reaction is UDP-N-acetyl-alpha-D-muramoyl-L-alanine + D-glutamate + ATP = UDP-N-acetyl-alpha-D-muramoyl-L-alanyl-D-glutamate + ADP + phosphate + H(+). It functions in the pathway cell wall biogenesis; peptidoglycan biosynthesis. Cell wall formation. Catalyzes the addition of glutamate to the nucleotide precursor UDP-N-acetylmuramoyl-L-alanine (UMA). This is UDP-N-acetylmuramoylalanine--D-glutamate ligase from Streptococcus pneumoniae (strain Hungary19A-6).